Here is a 146-residue protein sequence, read N- to C-terminus: Bacterial hemoglobin (146 aa).

One can recognise a Globin domain in the interval 1 to 138 (MLDQQTINII…IADVFIQVEA (138 aa)). Positions 53 and 85 each coordinate heme b.

The protein belongs to the globin family. Homodimer.

Its function is as follows. This protein functions as a terminal oxidase. The protein is Bacterial hemoglobin (vhb) of Vitreoscilla stercoraria.